The sequence spans 81 residues: ATP synthase subunit c (81 aa).

A run of 2 helical transmembrane segments spans residues I5 to G25 and V57 to A77.

It belongs to the ATPase C chain family. F-type ATPases have 2 components, F(1) - the catalytic core - and F(0) - the membrane proton channel. F(1) has five subunits: alpha(3), beta(3), gamma(1), delta(1), epsilon(1). F(0) has three main subunits: a(1), b(2) and c(10-14). The alpha and beta chains form an alternating ring which encloses part of the gamma chain. F(1) is attached to F(0) by a central stalk formed by the gamma and epsilon chains, while a peripheral stalk is formed by the delta and b chains.

It localises to the cell membrane. Its function is as follows. F(1)F(0) ATP synthase produces ATP from ADP in the presence of a proton or sodium gradient. F-type ATPases consist of two structural domains, F(1) containing the extramembraneous catalytic core and F(0) containing the membrane proton channel, linked together by a central stalk and a peripheral stalk. During catalysis, ATP synthesis in the catalytic domain of F(1) is coupled via a rotary mechanism of the central stalk subunits to proton translocation. Key component of the F(0) channel; it plays a direct role in translocation across the membrane. A homomeric c-ring of between 10-14 subunits forms the central stalk rotor element with the F(1) delta and epsilon subunits. In Mycobacterium bovis (strain ATCC BAA-935 / AF2122/97), this protein is ATP synthase subunit c.